Here is a 272-residue protein sequence, read N- to C-terminus: Hydroxyethylthiazole kinase (272 aa).

Methionine 45 lines the substrate pocket. Positions 121 and 168 each coordinate ATP. Position 195 (glycine 195) interacts with substrate.

The protein belongs to the Thz kinase family. In terms of assembly, homotrimer. Mg(2+) serves as cofactor.

It carries out the reaction 5-(2-hydroxyethyl)-4-methylthiazole + ATP = 4-methyl-5-(2-phosphooxyethyl)-thiazole + ADP + H(+). It functions in the pathway cofactor biosynthesis; thiamine diphosphate biosynthesis; 4-methyl-5-(2-phosphoethyl)-thiazole from 5-(2-hydroxyethyl)-4-methylthiazole: step 1/1. Its function is as follows. Catalyzes the phosphorylation of the hydroxyl group of 4-methyl-5-beta-hydroxyethylthiazole (THZ). The protein is Hydroxyethylthiazole kinase of Bacillus subtilis (strain 168).